The chain runs to 342 residues: Tetraacyldisaccharide 4'-kinase (342 aa).

68–75 is a binding site for ATP; sequence TVGGTGKT.

Belongs to the LpxK family.

The catalysed reaction is a lipid A disaccharide + ATP = a lipid IVA + ADP + H(+). It participates in glycolipid biosynthesis; lipid IV(A) biosynthesis; lipid IV(A) from (3R)-3-hydroxytetradecanoyl-[acyl-carrier-protein] and UDP-N-acetyl-alpha-D-glucosamine: step 6/6. In terms of biological role, transfers the gamma-phosphate of ATP to the 4'-position of a tetraacyldisaccharide 1-phosphate intermediate (termed DS-1-P) to form tetraacyldisaccharide 1,4'-bis-phosphate (lipid IVA). This Burkholderia vietnamiensis (strain G4 / LMG 22486) (Burkholderia cepacia (strain R1808)) protein is Tetraacyldisaccharide 4'-kinase.